The following is a 351-amino-acid chain: Prostaglandin reductase 2 (351 aa).

Residue 99 to 100 coordinates substrate; it reads FY. NADP(+) contacts are provided by residues 165 to 168, K192, Y208, N231, 253 to 259, 287 to 289, and N337; these read GACG, CGQISQY, and FLV. Position 288 to 290 (288 to 290) interacts with substrate; that stretch reads LVL.

Belongs to the NADP-dependent oxidoreductase L4BD family. Monomer.

Its subcellular location is the cytoplasm. The catalysed reaction is 13,14-dihydro-15-oxo-prostaglandin E2 + NAD(+) = 15-oxoprostaglandin E2 + NADH + H(+). It carries out the reaction 13,14-dihydro-15-oxo-prostaglandin E2 + NADP(+) = 15-oxoprostaglandin E2 + NADPH + H(+). It catalyses the reaction 13,14-dihydro-15-oxo-PGF2alpha + NADP(+) = 15-oxoprostaglandin F2alpha + NADPH + H(+). The enzyme catalyses 13,14-dihydro-15-oxo-prostaglandin E1 + NADP(+) = 15-oxoprostaglandin E1 + NADPH + H(+). The catalysed reaction is 13,14-dihydro-15-oxo-prostaglandin F1alpha + NADP(+) = 15-oxoprostaglandin F1alpha + NADPH + H(+). Functions as 15-oxo-prostaglandin 13-reductase and acts on 15-keto-PGE1, 15-keto-PGE2, 15-keto-PGE1-alpha and 15-keto-PGE2-alpha with highest activity towards 15-keto-PGE2. Overexpression represses transcriptional activity of PPARG and inhibits adipocyte differentiation. The sequence is that of Prostaglandin reductase 2 (PTGR2) from Bos taurus (Bovine).